Consider the following 325-residue polypeptide: GMP reductase (325 aa).

The active-site Thioimidate intermediate is the Cys173. An NADP(+)-binding site is contributed by 202 to 225; that stretch reads IIADGGIRSHGDIAKSVRFGATMV.

It belongs to the IMPDH/GMPR family. GuaC type 2 subfamily.

The catalysed reaction is IMP + NH4(+) + NADP(+) = GMP + NADPH + 2 H(+). Functionally, catalyzes the irreversible NADPH-dependent deamination of GMP to IMP. It functions in the conversion of nucleobase, nucleoside and nucleotide derivatives of G to A nucleotides, and in maintaining the intracellular balance of A and G nucleotides. The chain is GMP reductase from Acidovorax sp. (strain JS42).